The chain runs to 267 residues: Hydroxynaphthalene reductase-like protein Arp2 (267 aa).

Residues Ile25, Asn45, Asp71, and Asn98 each contribute to the NADP(+) site. Residues Ser147 and Ser148 each act as proton donor in the active site. 4 residues coordinate NADP(+): Tyr162, Lys166, Val195, and Thr197. The active-site Proton acceptor is Tyr162. The active-site Lowers pKa of active site Tyr is the Lys166.

The protein belongs to the short-chain dehydrogenases/reductases (SDR) family.

Hydroxynaphthalene reductase-like protein; part of the Pks2 gene cluster that mediates the formation of infectious structures (appressoria), enabling these fungi to kill insects faster. The product of the Pks2 gene cluster is different from the one of Pks1 and has still not been identified. The protein is Hydroxynaphthalene reductase-like protein Arp2 of Metarhizium brunneum (strain ARSEF 3297).